Reading from the N-terminus, the 2113-residue chain is Ninein (2113 aa).

EF-hand domains follow at residues 8–43 (QHEA…LCLE) and 42–77 (LEDV…ILSR). S152 bears the Phosphoserine mark. EF-hand domains are found at residues 182–217 (WIEE…YGLQ) and 219–252 (VDGA…TGKS). A GTP-binding site is contributed by 245-252 (GLFKTGKS). S269 carries the phosphoserine modification. 300–304 (DGMGQ) serves as a coordination point for GTP. One can recognise an EF-hand 5 domain in the interval 317–352 (EGIENSQEILKALDFSLDGNINLTELTLALENELLV). Residues 358–570 (HQAALASFKA…YQAQGRVLRL (213 aa)) are a coiled coil. 420–423 (RKLD) contacts GTP. Residues 578-599 (EELDGHSGGIEPDQGPGSEECN) are disordered. 4 coiled-coil regions span residues 620–926 (RDLC…ESQH), 958–1008 (EQLA…STEI), 1175–1323 (EDTR…MEKV), and 1425–1806 (AALL…IDKD). The interval 798–1495 (EMETECNRRV…QDLQITCGEM (698 aa)) is important for interaction with CEP170. Phosphoserine occurs at positions 1540 and 1826. 2 coiled-coil regions span residues 1852-1910 (VQNT…KEQS) and 1971-2093 (REQF…IASL). Disordered stretches follow at residues 1899–1922 (KREC…MGSL) and 1988–2008 (SQHL…PQGN). Residues 1988–1999 (SQHLQEELENRT) show a composition bias toward basic and acidic residues.

In terms of assembly, homooligomer. Interacts with GSK3B/GSK3-beta via its C-terminal domain. Interacts with C14ORF166, such interaction may prevent its phosphorylation by GSK3B. Interacts with AUNIP (via N-terminus). Identified in a complex with AUNIP and AURKA. Interacts with CCDC120. Interacts (via C-terminus) with CEP250. Interacts with CEP170. Interacts (via N-terminus) with the gamma-tubulin ring complex component TUBGCP3. Interacts with gamma-tubulin. Isoform 4 does not interact with CEP170 or CEP250. Phosphorylated by AURKA/Aurora kinase A and PKA kinases but not CK2 or AURKB/Aurora kinase B. As to expression, widely expressed. Highly expressed in spleen, bone marrow and skin. Weakly expressed in liver and small intestine. Expressed in brain.

It localises to the cytoplasm. It is found in the cytoskeleton. The protein localises to the microtubule organizing center. The protein resides in the centrosome. Its subcellular location is the centriole. In terms of biological role, centrosomal protein required for the positioning and anchorage of the microtubule minus-end in epithelial cells. May also act as a centrosome maturation factor. May play a role in microtubule nucleation, by recruiting the gamma-tubulin ring complex to the centrosome. Overexpression does not perturb nucleation or elongation of microtubules but suppresses release of microtubules. Required for centriole organization and microtubule anchoring at the mother centriole. The sequence is that of Ninein from Mus musculus (Mouse).